Reading from the N-terminus, the 155-residue chain is Small ribosomal subunit protein uS7c (155 aa).

The protein belongs to the universal ribosomal protein uS7 family. As to quaternary structure, part of the 30S ribosomal subunit.

The protein localises to the plastid. It is found in the chloroplast. One of the primary rRNA binding proteins, it binds directly to 16S rRNA where it nucleates assembly of the head domain of the 30S subunit. In Cornus mas (Cornelian cherry dogwood), this protein is Small ribosomal subunit protein uS7c (rps7).